The primary structure comprises 282 residues: Large ribosomal subunit protein uL2 (282 aa).

The interval 215–282 (RHKGIRPTVR…IIRSRKETKK (68 aa)) is disordered. The segment covering 263 to 282 (RNPKKPSTKLIIRSRKETKK) has biased composition (basic residues).

Belongs to the universal ribosomal protein uL2 family. Part of the 50S ribosomal subunit. Forms a bridge to the 30S subunit in the 70S ribosome.

Its function is as follows. One of the primary rRNA binding proteins. Required for association of the 30S and 50S subunits to form the 70S ribosome, for tRNA binding and peptide bond formation. It has been suggested to have peptidyltransferase activity; this is somewhat controversial. Makes several contacts with the 16S rRNA in the 70S ribosome. The chain is Large ribosomal subunit protein uL2 from Mesomycoplasma hyopneumoniae (strain 7448) (Mycoplasma hyopneumoniae).